The primary structure comprises 83 residues: Small ribosomal subunit protein uS17 (83 aa).

This sequence belongs to the universal ribosomal protein uS17 family. As to quaternary structure, part of the 30S ribosomal subunit.

One of the primary rRNA binding proteins, it binds specifically to the 5'-end of 16S ribosomal RNA. The protein is Small ribosomal subunit protein uS17 of Colwellia psychrerythraea (strain 34H / ATCC BAA-681) (Vibrio psychroerythus).